We begin with the raw amino-acid sequence, 78 residues long: Short neurotoxin 342 (78 aa).

Residues 1–21 (MKTLLLTLVVLTIVCLDLGYT) form the signal peptide. Intrachain disulfides connect C24–C43, C38–C57, C59–C70, and C71–C76.

Belongs to the three-finger toxin family. Short-chain subfamily. Type I alpha-neurotoxin sub-subfamily. Expressed by the venom gland.

The protein resides in the secreted. Binds to muscle nicotinic acetylcholine receptor (nAChR) and inhibit acetylcholine from binding to the receptor, thereby impairing neuromuscular transmission. The protein is Short neurotoxin 342 of Drysdalia coronoides (White-lipped snake).